Here is a 209-residue protein sequence, read N- to C-terminus: MSRAATTRMGLLEVRARRAVAGKGARLLRAKREVLASELWRLVHDVLEGRARLDEALRRAVKALELAKALEGEERLASLALPAARAVPLAVTVRRVWGVPTPSVAAPPLVRAADQRGSSPVSWGPSGAAAARHHEESLEVLLTIASKELHLARLGEEIQETSRRINALEQLVLPALRSEASRIAAALDERDREDAVRLRRFRARHPRPA.

This sequence belongs to the V-ATPase D subunit family.

Functionally, produces ATP from ADP in the presence of a proton gradient across the membrane. The protein is V-type ATP synthase subunit D of Anaeromyxobacter dehalogenans (strain 2CP-C).